A 203-amino-acid polypeptide reads, in one-letter code: Molybdenum cofactor guanylyltransferase (203 aa).

Residues 12–14, K25, N53, D71, and D101 each bind GTP; that span reads LAG. Residue D101 participates in Mg(2+) binding.

The protein belongs to the MobA family. As to quaternary structure, monomer. Requires Mg(2+) as cofactor.

The protein resides in the cytoplasm. The enzyme catalyses Mo-molybdopterin + GTP + H(+) = Mo-molybdopterin guanine dinucleotide + diphosphate. Its function is as follows. Transfers a GMP moiety from GTP to Mo-molybdopterin (Mo-MPT) cofactor (Moco or molybdenum cofactor) to form Mo-molybdopterin guanine dinucleotide (Mo-MGD) cofactor. The polypeptide is Molybdenum cofactor guanylyltransferase (Methylibium petroleiphilum (strain ATCC BAA-1232 / LMG 22953 / PM1)).